The chain runs to 85 residues: Small integral membrane protein 2 (85 aa).

A helical transmembrane segment spans residues 21-43; it reads GHAISILFGFWTSFICDTYIVLA. Residues 51–85 form a disordered region; the sequence is SPDVSASSDEPYARIQQSRRQCHAEEDQSQVPEAG.

The protein resides in the membrane. In Homo sapiens (Human), this protein is Small integral membrane protein 2 (SMIM2).